Reading from the N-terminus, the 1131-residue chain is MLHVSASKGMTEYFKNILDDVSNLYNLAEECRKNGYDVTDHVEIPLAKDMADRVEGIVGPKNVAERIRELVSEFGKEPAALEIAKEIVEGKFGEFGREVGAEQAVRTALAVITEGIVAAPLEGIAYVKIKKNSDNSEYLAIYFAGPIRSAGGTAQALAVLVGDYVRKNMGLDRFKPTEDEVERYGEEVDLYQSEVTTFQYQPKAEEIRVAVRNISVEITGEATDDVEVSGHRDLPRVETNQIRGGALLALVEGVLLKAPKILRHVDKLNIEGWNWLKELKSKKEEVIEELEEENDEYNYEDEEDLSQYEDYEVEAVTKFIGEVIAGRPVFSHPSKKGGFRLRYGRSRNTGFATDGFHPAIMYLVDDFMAVGTQLKTERPGKATCVVPVDSIEGPIVKLNDGSVLKIDTVEKAKQYTDEVQEILFLGDILVNYGDFLENNHTVLPSSWCTEWYEKILKSQNLEYTEEFIKNPGQKEAVNYAKITKTPLHPKYTYFWHDISKENISTLRSWVIGGKYNPSNDSWELNYDPEDEEISNAKRYLELIGCPHIVMEEKVEIFEYYPFLYSLGYDFDEKRDMIDNIDEKLQNTKNNMHFINTIAPFEIRRNAYIYVGARMGRPEKAAARKMKPPVNGLFPIGNAGALVRLINKAVDEGKTDEIEIANVKCSCGKVSLYRTCPFCGNSVEPTGPSRIKLPIKDYWYKTLENLKINKPGDVKCIKGMTSKDKIIEPLEKAILRAKNNIYVFKDGTTRFDCTDVPVTHFKPVEIHVPIEKLKSLGYLKDIHGNPLENEDQVLELKVQDVIVPESCMDYFLNVSGFIDDLLEKYYKKDRFYNVNTREDLVGHLIIGMAPHTSAGMVGRIIGYSNANVGYAHPYFHASKRRNCDGDEDAFFLLLDAFMNFSKRFLPDKRGGQMDAPLVLTTILDPKEVDGEVHNMDSMWEYPLEFYEKSLEGIAPKEIKKMMETIEDRLDKDSQYEGIGYTHETSKIDEGPPICAYKTLGSMMEKTSAQLAVAKKIRATDERDVAEKVIQSHFVPDLIGNLRAFSRQGVRCKCGAKYRRMPLKGVCRKCGSRLILTVSKGAVEKYMNVSQTMAEKYDASDYIKQRLEIIKSGIDSLFVNDKRKQVKIEDFFK.

Belongs to the archaeal DNA polymerase II family. As to quaternary structure, heterodimer of a large subunit and a small subunit.

The catalysed reaction is DNA(n) + a 2'-deoxyribonucleoside 5'-triphosphate = DNA(n+1) + diphosphate. The enzyme catalyses Exonucleolytic cleavage in the 3'- to 5'-direction to yield nucleoside 5'-phosphates.. In terms of biological role, possesses two activities: a DNA synthesis (polymerase) and an exonucleolytic activity that degrades single-stranded DNA in the 3'- to 5'-direction. Has a template-primer preference which is characteristic of a replicative DNA polymerase. The sequence is that of DNA polymerase II large subunit from Methanococcus maripaludis (strain DSM 14266 / JCM 13030 / NBRC 101832 / S2 / LL).